Reading from the N-terminus, the 287-residue chain is Nucleotide-binding protein Hhal_2130 (287 aa).

Residue 11–18 (GLSGSGKS) coordinates ATP. A GTP-binding site is contributed by 63 to 66 (DARN).

The protein belongs to the RapZ-like family.

Displays ATPase and GTPase activities. This Halorhodospira halophila (strain DSM 244 / SL1) (Ectothiorhodospira halophila (strain DSM 244 / SL1)) protein is Nucleotide-binding protein Hhal_2130.